The chain runs to 681 residues: Peroxisomal acyl-coenzyme A oxidase 2 (681 aa).

At S9 the chain carries Phosphoserine. N6-succinyllysine is present on residues K66, K137, K453, K561, and K667. The Microbody targeting signal motif lies at 679-681 (SNL).

This sequence belongs to the acyl-CoA oxidase family. In terms of assembly, homodimer. The cofactor is FAD. Liver and kidney.

The protein resides in the peroxisome. The catalysed reaction is (25R)-3alpha,7alpha,12alpha-trihydroxy-5beta-cholestan-26-oyl-CoA + A + H2O = (24R,25R)-3alpha,7alpha,12alpha,24-tetrahydroxy-5beta-cholestan-26-oyl-CoA + AH2. It carries out the reaction (25S)-3alpha,7alpha,12alpha-trihydroxy-5beta-cholestan-26-oyl-CoA + O2 = (24E)-3alpha,7alpha,12alpha-trihydroxy-5beta-cholest-24-en-26-oyl-CoA + H2O2. Its function is as follows. Oxidizes the CoA esters of the bile acid intermediates di- and tri-hydroxycholestanoic acids. Capable of oxidizing short as well as long chain 2-methyl branched fatty acids. The polypeptide is Peroxisomal acyl-coenzyme A oxidase 2 (Oryctolagus cuniculus (Rabbit)).